Reading from the N-terminus, the 134-residue chain is MKKSAILNEHISKAIATIGHFDLLTINDAGMPIPNDHRRIDLAVTKNLPRFIDVLATVLEEMEIQKIYLAEEIKEHNPTQLQQIKQLISSEIEIIFIPHEEMKSNLAHPLNKGNIRTGETTPYSNIALESNVTF.

The active-site Proton donor is the His20. Residues Asp28, His99, and 123–125 (YSN) each bind substrate.

It belongs to the RbsD / FucU family. RbsD subfamily. Homodecamer.

Its subcellular location is the cytoplasm. It carries out the reaction beta-D-ribopyranose = beta-D-ribofuranose. Its pathway is carbohydrate metabolism; D-ribose degradation; D-ribose 5-phosphate from beta-D-ribopyranose: step 1/2. Its function is as follows. Catalyzes the interconversion of beta-pyran and beta-furan forms of D-ribose. This is D-ribose pyranase from Staphylococcus aureus (strain USA300).